The sequence spans 601 residues: Elongation factor 4 (601 aa).

Positions 6-188 constitute a tr-type G domain; that stretch reads NYIRNFSIVA…AIVRQLPPPH (183 aa). GTP-binding positions include 18 to 23 and 135 to 138; these read DHGKST and NKVD.

This sequence belongs to the TRAFAC class translation factor GTPase superfamily. Classic translation factor GTPase family. LepA subfamily.

The protein localises to the cell inner membrane. The catalysed reaction is GTP + H2O = GDP + phosphate + H(+). In terms of biological role, required for accurate and efficient protein synthesis under certain stress conditions. May act as a fidelity factor of the translation reaction, by catalyzing a one-codon backward translocation of tRNAs on improperly translocated ribosomes. Back-translocation proceeds from a post-translocation (POST) complex to a pre-translocation (PRE) complex, thus giving elongation factor G a second chance to translocate the tRNAs correctly. Binds to ribosomes in a GTP-dependent manner. The protein is Elongation factor 4 of Bartonella quintana (strain Toulouse) (Rochalimaea quintana).